The primary structure comprises 463 residues: mRNA-capping enzyme subunit alpha (463 aa).

The N6-GMP-lysine intermediate role is filled by Lys-66. The segment at 404-463 is disordered; the sequence is WEERKSKKRTHSSISGPMLPPVAETKAPREATQSRYIDDEDWSDEADDDDEDSLKRARIE. Over residues 441-455 the composition is skewed to acidic residues; the sequence is DDEDWSDEADDDDED.

It belongs to the eukaryotic GTase family. In terms of assembly, heterodimer. The mRNA-capping enzyme is composed of two separate chains alpha and beta, respectively a mRNA guanylyltransferase and an mRNA 5'-triphosphate monophosphatase.

Its subcellular location is the nucleus. The enzyme catalyses a 5'-end diphospho-ribonucleoside in mRNA + GTP + H(+) = a 5'-end (5'-triphosphoguanosine)-ribonucleoside in mRNA + diphosphate. Functionally, second step of mRNA capping. Transfer of the GMP moiety of GTP to the 5'-end of RNA via an enzyme-GMP covalent reaction intermediate. The chain is mRNA-capping enzyme subunit alpha (CEG1) from Eremothecium gossypii (strain ATCC 10895 / CBS 109.51 / FGSC 9923 / NRRL Y-1056) (Yeast).